A 373-amino-acid polypeptide reads, in one-letter code: 3-dehydroquinate synthase (373 aa).

NAD(+) is bound by residues 120-124, 144-145, lysine 157, lysine 166, and 184-187; these read GVVGD, TT, and FLKT. 3 residues coordinate Zn(2+): glutamate 199, histidine 262, and histidine 278.

Belongs to the sugar phosphate cyclases superfamily. Dehydroquinate synthase family. NAD(+) serves as cofactor. Co(2+) is required as a cofactor. Requires Zn(2+) as cofactor.

It localises to the cytoplasm. It carries out the reaction 7-phospho-2-dehydro-3-deoxy-D-arabino-heptonate = 3-dehydroquinate + phosphate. The protein operates within metabolic intermediate biosynthesis; chorismate biosynthesis; chorismate from D-erythrose 4-phosphate and phosphoenolpyruvate: step 2/7. In terms of biological role, catalyzes the conversion of 3-deoxy-D-arabino-heptulosonate 7-phosphate (DAHP) to dehydroquinate (DHQ). The sequence is that of 3-dehydroquinate synthase from Clostridium tetani (strain Massachusetts / E88).